Here is a 98-residue protein sequence, read N- to C-terminus: Large ribosomal subunit protein uL23 (98 aa).

The protein belongs to the universal ribosomal protein uL23 family. In terms of assembly, part of the 50S ribosomal subunit. Contacts protein L29, and trigger factor when it is bound to the ribosome.

Its function is as follows. One of the early assembly proteins it binds 23S rRNA. One of the proteins that surrounds the polypeptide exit tunnel on the outside of the ribosome. Forms the main docking site for trigger factor binding to the ribosome. The chain is Large ribosomal subunit protein uL23 from Jannaschia sp. (strain CCS1).